A 1594-amino-acid chain; its full sequence is Transcription factor Gibbin (1594 aa).

4 disordered regions span residues 19–111 (PDYL…RHWD), 149–241 (LRLS…LADA), 256–307 (QLLE…DPLG), and 367–464 (CSPH…RKGK). A compositionally biased stretch (pro residues) spans 30–47 (GGPPTPRPLLPTRPPASP). Position 79 is an N6-acetyllysine (lysine 79). Over residues 165–177 (SFFSSPSLANSIR) the composition is skewed to polar residues. The span at 178 to 193 (SPEERANPHTKSERPS) shows a compositional bias: basic and acidic residues. Over residues 228–240 (PEPDGPDYSELAD) the composition is skewed to acidic residues. Position 267 is a phosphoserine (serine 267). Residues 272-303 (PQLLDPQPRFLDPQALEPLGEGLELPPLQPLA) are compositionally biased toward low complexity. Basic residues predominate over residues 391-401 (ILCRRRKAGRG). A DNA-binding region (a.T hook 1) is located at residues 395-407 (RRKAGRGRKADSG). Pro residues predominate over residues 427 to 447 (EPPPLPPPPPPTLSGPGPVPE). The a.T hook 2 DNA-binding region spans 541–553 (KRKRGRPPKNLLL). Residues 578–604 (MPEVKKRRRRKQKLASPQPSYAADAND) form a disordered region. Serine 593 bears the Phosphoserine mark. Lysine 606 is covalently cross-linked (Glycyl lysine isopeptide (Lys-Gly) (interchain with G-Cter in SUMO2)). The interval 714 to 789 (LTELGHPRKR…PGGQAGRNCG (76 aa)) is disordered. Basic residues predominate over residues 734-743 (KPKRKRRSRK). Phosphoserine is present on residues serine 825 and serine 842. Arginine 887 bears the Omega-N-methylarginine mark. Phosphoserine is present on serine 892. Residues 942-967 (KLAPPPSAVARSPTTHPPANTYPPQY) form a disordered region. Phosphoserine is present on serine 1060. Disordered regions lie at residues 1152 to 1191 (VSET…QSSL) and 1245 to 1306 (STSA…PDLG). 3 stretches are compositionally biased toward low complexity: residues 1153–1168 (SETF…QFSQ), 1180–1191 (SEASSSEGQSSL), and 1245–1264 (STSA…PRQP). Serine 1180 is subject to Phosphoserine. Phosphoserine occurs at positions 1315, 1317, and 1392. Threonine 1394 is subject to Phosphothreonine. Residue serine 1396 is modified to Phosphoserine. Residue lysine 1402 forms a Glycyl lysine isopeptide (Lys-Gly) (interchain with G-Cter in SUMO2) linkage. The segment at 1495–1525 (HLASPPATPKADKEPLEMARPPGPPRGPAAA) is disordered. Serine 1498 and serine 1540 each carry phosphoserine.

The protein localises to the nucleus. The protein resides in the chromosome. Functionally, transcription factor required for the proper patterning of the epidermis, which plays a key role in early epithelial morphogenesis. Directly binds promoter and enhancer regions and acts by maintaining local enhancer-promoter chromatin architecture. Interacts with many sequence-specific zinc-finger transcription factors and methyl-CpG-binding proteins to regulate the expression of mesoderm genes that wire surface ectoderm stratification. The polypeptide is Transcription factor Gibbin (Mus musculus (Mouse)).